Reading from the N-terminus, the 156-residue chain is Small ribosomal subunit protein uS7 (156 aa).

This sequence belongs to the universal ribosomal protein uS7 family. Part of the 30S ribosomal subunit. Contacts proteins S9 and S11.

In terms of biological role, one of the primary rRNA binding proteins, it binds directly to 16S rRNA where it nucleates assembly of the head domain of the 30S subunit. Is located at the subunit interface close to the decoding center, probably blocks exit of the E-site tRNA. The chain is Small ribosomal subunit protein uS7 from Desulforamulus reducens (strain ATCC BAA-1160 / DSM 100696 / MI-1) (Desulfotomaculum reducens).